A 2604-amino-acid polypeptide reads, in one-letter code: Probable polyketide synthase 17 (2604 aa).

The 423-residue stretch at asparagine 11–glutamate 433 folds into the Ketosynthase family 3 (KS3) domain. Residues cysteine 179, histidine 316, and histidine 356 each act as for beta-ketoacyl synthase activity in the active site. Positions glycine 631–tyrosine 664 are acyl/malonyl transferases. Serine 641 serves as the catalytic For acyl/malonyl transferase activity. Positions asparagine 937–proline 1057 are N-terminal hotdog fold. The PKS/mFAS DH domain occupies asparagine 937–glutamine 1216. Histidine 968 functions as the Proton acceptor; for dehydratase activity in the catalytic mechanism. Residues serine 1072–glutamine 1216 form a C-terminal hotdog fold region. The Proton donor; for dehydratase activity role is filled by aspartate 1132. The interval glycine 1357–asparagine 1407 is disordered. Residues serine 1363–serine 1390 show a composition bias toward low complexity. A Carrier domain is found at glycine 2507–serine 2584. The residue at position 2544 (serine 2544) is an O-(pantetheine 4'-phosphoryl)serine. The segment covering serine 2581–lysine 2597 has biased composition (low complexity). A disordered region spans residues serine 2581–threonine 2604.

The cofactor is pantetheine 4'-phosphate.

Probable polyketide synthase. This chain is Probable polyketide synthase 17 (pks17), found in Dictyostelium discoideum (Social amoeba).